We begin with the raw amino-acid sequence, 218 residues long: Small ribosomal subunit protein uS3c (218 aa).

The KH type-2 domain maps to 43-118 (IKNYVQKNMR…KLNIAITRIA (76 aa)).

This sequence belongs to the universal ribosomal protein uS3 family. Part of the 30S ribosomal subunit.

The protein resides in the plastid. Its subcellular location is the chloroplast. The protein is Small ribosomal subunit protein uS3c (rps3) of Buxus microphylla (Littleleaf boxwood).